A 1444-amino-acid polypeptide reads, in one-letter code: Protein shortage in chiasmata 1 ortholog (1444 aa).

Residues 1106–1117 (SITKSPQISSPQ) show a composition bias toward low complexity. The interval 1106–1129 (SITKSPQISSPQENRNQISTLSSQ) is disordered.

Belongs to the XPF family. Highly divergent. Interacts with TEX11. Interacts with SPO16.

The protein resides in the chromosome. In terms of biological role, ATPase required during meiosis for the formation of crossover recombination intermediates. Binds DNA: preferentially binds to single-stranded DNA and DNA branched structures. Does not show nuclease activity in vitro, but shows ATPase activity, which is stimulated by the presence of single-stranded DNA. Plays a key role in homologous recombination and crossing-over in meiotic prophase I in male and female germ cells. Required for proper synaptonemal complex assembly and homologous chromosome pairing. Requiref for recruitment TEX11 and MSH4 to recombination intermediates. This Homo sapiens (Human) protein is Protein shortage in chiasmata 1 ortholog.